The primary structure comprises 176 residues: Thiol-disulfide oxidoreductase ResA (176 aa).

A helical; Signal-anchor for type II membrane protein membrane pass occupies residues 11–30 (LSILAVISVALGYTFYSNFF). In terms of domain architecture, Thioredoxin spans 36-176 (ARAGEQAVNF…EFMELIKPEA (141 aa)). A disulfide bridge connects residues Cys-74 and Cys-77.

It belongs to the thioredoxin family. ResA subfamily.

The protein localises to the cell membrane. It functions in the pathway protein modification; cytochrome c assembly. Functionally, thiol-disulfide oxidoreductase which is required in disulfide reduction during c-type cytochrome synthesis. May accept reducing equivalents from CcdA, leading to breakage of disulfide bonds in apocytochrome c; following this reduction heme can be covalently attached. This chain is Thiol-disulfide oxidoreductase ResA, found in Halalkalibacterium halodurans (strain ATCC BAA-125 / DSM 18197 / FERM 7344 / JCM 9153 / C-125) (Bacillus halodurans).